Here is a 521-residue protein sequence, read N- to C-terminus: Protein nucleotidyltransferase YdiU (521 aa).

The ATP site is built by glycine 109, glycine 111, arginine 112, lysine 131, aspartate 143, glycine 144, arginine 194, and arginine 201. Aspartate 270 (proton acceptor) is an active-site residue. 2 residues coordinate Mg(2+): asparagine 271 and aspartate 280. Aspartate 280 provides a ligand contact to ATP.

Belongs to the SELO family. It depends on Mg(2+) as a cofactor. The cofactor is Mn(2+).

It catalyses the reaction L-seryl-[protein] + ATP = 3-O-(5'-adenylyl)-L-seryl-[protein] + diphosphate. The catalysed reaction is L-threonyl-[protein] + ATP = 3-O-(5'-adenylyl)-L-threonyl-[protein] + diphosphate. It carries out the reaction L-tyrosyl-[protein] + ATP = O-(5'-adenylyl)-L-tyrosyl-[protein] + diphosphate. The enzyme catalyses L-histidyl-[protein] + UTP = N(tele)-(5'-uridylyl)-L-histidyl-[protein] + diphosphate. It catalyses the reaction L-seryl-[protein] + UTP = O-(5'-uridylyl)-L-seryl-[protein] + diphosphate. The catalysed reaction is L-tyrosyl-[protein] + UTP = O-(5'-uridylyl)-L-tyrosyl-[protein] + diphosphate. Its function is as follows. Nucleotidyltransferase involved in the post-translational modification of proteins. It can catalyze the addition of adenosine monophosphate (AMP) or uridine monophosphate (UMP) to a protein, resulting in modifications known as AMPylation and UMPylation. This Burkholderia pseudomallei (strain K96243) protein is Protein nucleotidyltransferase YdiU.